The chain runs to 170 residues: Large ribosomal subunit protein bL9 (170 aa).

Residues 149–170 (DGDNEDLDEDNAADENEDYSEE) are disordered.

It belongs to the bacterial ribosomal protein bL9 family.

Its function is as follows. Binds to the 23S rRNA. The protein is Large ribosomal subunit protein bL9 of Psychrobacter cryohalolentis (strain ATCC BAA-1226 / DSM 17306 / VKM B-2378 / K5).